Consider the following 360-residue polypeptide: DnaJ homolog subfamily C member 25 (360 aa).

The helical transmembrane segment at 20–40 (WMLLAPLLPALLLVRPAGALV) threads the bilayer. In terms of domain architecture, J spans 49-124 (DCYEVLGVSR…ETRKDYDYML (76 aa)). A run of 2 helical transmembrane segments spans residues 150–170 (VVIL…WWNS) and 244–264 (LLLF…VWYC).

Belongs to the DNAJC25 family.

It is found in the membrane. The protein is DnaJ homolog subfamily C member 25 (DNAJC25) of Homo sapiens (Human).